Consider the following 208-residue polypeptide: Holliday junction resolvase RecU (208 aa).

Residues T87, D89, E102, and Q121 each contribute to the Mg(2+) site.

Belongs to the RecU family. The cofactor is Mg(2+).

The protein resides in the cytoplasm. The catalysed reaction is Endonucleolytic cleavage at a junction such as a reciprocal single-stranded crossover between two homologous DNA duplexes (Holliday junction).. Endonuclease that resolves Holliday junction intermediates in genetic recombination. Cleaves mobile four-strand junctions by introducing symmetrical nicks in paired strands. Promotes annealing of linear ssDNA with homologous dsDNA. Required for DNA repair, homologous recombination and chromosome segregation. The polypeptide is Holliday junction resolvase RecU (Staphylococcus aureus (strain MRSA252)).